Reading from the N-terminus, the 257-residue chain is Membrane protein insertase YidC 1 (257 aa).

The N-terminal stretch at 1-20 is a signal peptide; the sequence is MYRKFGMAAMLVSILLLMTG. Cys-21 is lipidated: N-palmitoyl cysteine. Cys-21 carries the S-diacylglycerol cysteine lipid modification. 5 consecutive transmembrane segments (helical) span residues 35–55, 59–79, 129–149, 160–180, and 205–225; these read IWDSYFVYPLSWLMIYFANAF, FGLAIIVVTLLIRLLILPLMI, LAGCFPVLIQMPILLAFYHAI, FLWFVLNQPDPILLPIIAGIT, and VMILVFAMFLPSSLALYWVIG.

This sequence belongs to the OXA1/ALB3/YidC family. Type 2 subfamily.

The protein localises to the cell membrane. Its function is as follows. Required for the insertion and/or proper folding and/or complex formation of integral membrane proteins into the membrane. Involved in integration of membrane proteins that insert both dependently and independently of the Sec translocase complex, as well as at least some lipoproteins. The polypeptide is Membrane protein insertase YidC 1 (Halalkalibacterium halodurans (strain ATCC BAA-125 / DSM 18197 / FERM 7344 / JCM 9153 / C-125) (Bacillus halodurans)).